The primary structure comprises 369 residues: Proton-coupled zinc antiporter SLC30A8 (369 aa).

Topologically, residues 1–79 are cytoplasmic; it reads MEFLERTYLV…AKWKLCSASA (79 aa). Residues 31–52 are disordered; it reads PVNKDQCPRERPEELESGGMYH. The span at 32–44 shows a compositional bias: basic and acidic residues; sequence VNKDQCPRERPEE. Positions 52, 53, and 54 each coordinate Zn(2+). The short motif at 52-54 is the HCH Motif; seals regulatory zinc-binding pocket element; the sequence is HCH. A helical transmembrane segment spans residues 80 to 100; it reads ICFIFMIAEVVGGHIAGSLAV. The Lumenal, vesicle segment spans residues 101–103; the sequence is VTD. A helical transmembrane segment spans residues 104–124; the sequence is AAHLLIDLTSFLLSLFSLWLS. Zn(2+) is bound by residues His106, Asp110, and His137. At 125 to 140 the chain is on the cytoplasmic side; that stretch reads SKPPSKRLTFGWHRAE. The chain crosses the membrane as a helical span at residues 141-161; it reads ILGALLSILCIWVVTGVLVYL. Topologically, residues 162-175 are lumenal, vesicle; it reads ACERLLYPDYQIQA. A helical membrane pass occupies residues 176–196; it reads TVMIIVSSCAVAANIVLTVVL. The Cytoplasmic portion of the chain corresponds to 197–217; that stretch reads HQRCLGHNHKEVQANASVRAA. A helical membrane pass occupies residues 218–238; sequence FVHALGDLFQSISVLISALII. Residues His220 and Asp224 each contribute to the Zn(2+) site. Residues 239–245 lie on the Lumenal, vesicle side of the membrane; the sequence is YFKPEYK. A helical membrane pass occupies residues 246 to 266; sequence IADPICTFIFSILVLASTITI. Topologically, residues 267-369 are cytoplasmic; that stretch reads LKDFSILLME…DCLFCEDPCD (103 aa). Zn(2+) contacts are provided by His301, His318, His345, Glu352, Cys361, and Cys364.

The protein belongs to the cation diffusion facilitator (CDF) transporter (TC 2.A.4) family. SLC30A subfamily. As to quaternary structure, homodimer. As to expression, in the endocrine pancreas, expressed in insulin-producing beta cells. Expressed at relatively high levels in subcutaneous fat tissue from lean persons; much lower levels in visceral fat, whether from lean or obese individuals, and in subcutaneous fat tissue from obese individuals. Expressed in peripheral blood mononuclear cells, including T-cells and B-cells, with great variation among individuals ranging from negative to strongly positive.

The protein localises to the cytoplasmic vesicle. It localises to the secretory vesicle membrane. It is found in the cell membrane. The enzyme catalyses Zn(2+)(in) + 2 H(+)(out) = Zn(2+)(out) + 2 H(+)(in). Its function is as follows. Proton-coupled zinc ion antiporter mediating the entry of zinc into the lumen of pancreatic beta cell secretory granules, thereby regulating insulin secretion. The protein is Proton-coupled zinc antiporter SLC30A8 of Homo sapiens (Human).